Here is a 431-residue protein sequence, read N- to C-terminus: Serine--tRNA ligase (431 aa).

237 to 239 lines the L-serine pocket; the sequence is TAE. An ATP-binding site is contributed by 268-270; it reads RSE. Glu291 contacts L-serine. Residue 355–358 participates in ATP binding; it reads EISS. An L-serine-binding site is contributed by Ser390.

It belongs to the class-II aminoacyl-tRNA synthetase family. Type-1 seryl-tRNA synthetase subfamily. Homodimer. The tRNA molecule binds across the dimer.

Its subcellular location is the cytoplasm. The enzyme catalyses tRNA(Ser) + L-serine + ATP = L-seryl-tRNA(Ser) + AMP + diphosphate + H(+). It catalyses the reaction tRNA(Sec) + L-serine + ATP = L-seryl-tRNA(Sec) + AMP + diphosphate + H(+). The protein operates within aminoacyl-tRNA biosynthesis; selenocysteinyl-tRNA(Sec) biosynthesis; L-seryl-tRNA(Sec) from L-serine and tRNA(Sec): step 1/1. Functionally, catalyzes the attachment of serine to tRNA(Ser). Is also able to aminoacylate tRNA(Sec) with serine, to form the misacylated tRNA L-seryl-tRNA(Sec), which will be further converted into selenocysteinyl-tRNA(Sec). The protein is Serine--tRNA ligase of Neisseria gonorrhoeae (strain ATCC 700825 / FA 1090).